Here is a 227-residue protein sequence, read N- to C-terminus: Cytochrome c oxidase subunit 2 (227 aa).

Over 1-14 (MAHAAQVGLQDATS) the chain is Mitochondrial intermembrane. Residues 15-45 (PIMEELIIFHDHALMIIFLICFLVLYALFLT) form a helical membrane-spanning segment. The Mitochondrial matrix portion of the chain corresponds to 46–59 (LTTKLTSTNISDAQ). The helical transmembrane segment at 60–87 (EMETVWTILPAIILVLIALPSLRILYMT) threads the bilayer. At 88–227 (DEINDPSFTI…IFEMGPVFTL (140 aa)) the chain is on the mitochondrial intermembrane side. Residues histidine 161, cysteine 196, glutamate 198, cysteine 200, histidine 204, and methionine 207 each contribute to the Cu cation site. Glutamate 198 provides a ligand contact to Mg(2+).

It belongs to the cytochrome c oxidase subunit 2 family. In terms of assembly, component of the cytochrome c oxidase (complex IV, CIV), a multisubunit enzyme composed of 14 subunits. The complex is composed of a catalytic core of 3 subunits MT-CO1, MT-CO2 and MT-CO3, encoded in the mitochondrial DNA, and 11 supernumerary subunits COX4I, COX5A, COX5B, COX6A, COX6B, COX6C, COX7A, COX7B, COX7C, COX8 and NDUFA4, which are encoded in the nuclear genome. The complex exists as a monomer or a dimer and forms supercomplexes (SCs) in the inner mitochondrial membrane with NADH-ubiquinone oxidoreductase (complex I, CI) and ubiquinol-cytochrome c oxidoreductase (cytochrome b-c1 complex, complex III, CIII), resulting in different assemblies (supercomplex SCI(1)III(2)IV(1) and megacomplex MCI(2)III(2)IV(2)). Found in a complex with TMEM177, COA6, COX18, COX20, SCO1 and SCO2. Interacts with TMEM177 in a COX20-dependent manner. Interacts with COX20. Interacts with COX16. Requires Cu cation as cofactor.

Its subcellular location is the mitochondrion inner membrane. It carries out the reaction 4 Fe(II)-[cytochrome c] + O2 + 8 H(+)(in) = 4 Fe(III)-[cytochrome c] + 2 H2O + 4 H(+)(out). Component of the cytochrome c oxidase, the last enzyme in the mitochondrial electron transport chain which drives oxidative phosphorylation. The respiratory chain contains 3 multisubunit complexes succinate dehydrogenase (complex II, CII), ubiquinol-cytochrome c oxidoreductase (cytochrome b-c1 complex, complex III, CIII) and cytochrome c oxidase (complex IV, CIV), that cooperate to transfer electrons derived from NADH and succinate to molecular oxygen, creating an electrochemical gradient over the inner membrane that drives transmembrane transport and the ATP synthase. Cytochrome c oxidase is the component of the respiratory chain that catalyzes the reduction of oxygen to water. Electrons originating from reduced cytochrome c in the intermembrane space (IMS) are transferred via the dinuclear copper A center (CU(A)) of subunit 2 and heme A of subunit 1 to the active site in subunit 1, a binuclear center (BNC) formed by heme A3 and copper B (CU(B)). The BNC reduces molecular oxygen to 2 water molecules using 4 electrons from cytochrome c in the IMS and 4 protons from the mitochondrial matrix. The sequence is that of Cytochrome c oxidase subunit 2 (MT-CO2) from Gorilla gorilla beringei (Mountain gorilla).